The sequence spans 159 residues: Phosphopantetheine adenylyltransferase (159 aa).

It belongs to the eukaryotic CoaD family.

It is found in the cytoplasm. The enzyme catalyses (R)-4'-phosphopantetheine + ATP + H(+) = 3'-dephospho-CoA + diphosphate. It functions in the pathway cofactor biosynthesis; coenzyme A biosynthesis. Its function is as follows. Reversibly transfers an adenylyl group from ATP to 4'-phosphopantetheine, yielding dephospho-CoA (dPCoA) and pyrophosphate. The protein is Phosphopantetheine adenylyltransferase of Thermococcus gammatolerans (strain DSM 15229 / JCM 11827 / EJ3).